A 250-amino-acid chain; its full sequence is Probable E3 ubiquitin-protein ligase RHY1A (250 aa).

Polar residues predominate over residues Met1–Thr10. The tract at residues Met1–Leu106 is disordered. Basic residues predominate over residues Tyr29–Gln47. Basic and acidic residues predominate over residues Arg48–Arg58. A compositionally biased stretch (basic residues) spans Pro60 to His69. Basic and acidic residues predominate over residues Pro71 to Arg80. Low complexity predominate over residues Thr91–Ser102. Residues Cys203–Arg244 form an RING-type; atypical zinc finger.

The enzyme catalyses S-ubiquitinyl-[E2 ubiquitin-conjugating enzyme]-L-cysteine + [acceptor protein]-L-lysine = [E2 ubiquitin-conjugating enzyme]-L-cysteine + N(6)-ubiquitinyl-[acceptor protein]-L-lysine.. The protein operates within protein modification; protein ubiquitination. Its function is as follows. Probable E3 ubiquitin-protein ligase that may possess E3 ubiquitin ligase activity in vitro. The protein is Probable E3 ubiquitin-protein ligase RHY1A of Arabidopsis thaliana (Mouse-ear cress).